A 343-amino-acid chain; its full sequence is MKFIDEVSISLASGRGGPGCVSFRRESMQARGGPDGGNGGKGGDVIIRTSRHINSLVDIRQNKRYAAQSGRMGEGRQKSGMDGEDLILIVPQGTVFRNMDGEIIIDMTGISEHTLLKGGRGGKGNEFFKNSVNQAPEHAQPGEEGQEIEVRLELKLIADVGIVGFPNAGKSTLISRISAARPKIADYPFTTLTPNLGVVKAGDYSSFVVADIPGLVKGAHAGVGLGIQFLKHIERTRLFIHLVDASGMSGRDPLEDYTDINNELKMYDENNQDKEGFFPLSTRPQLVVLNKIDTLSESQLTKLKKQFKEASGSEPFAISAVTGKNIKEFVQELARQILKEEEE.

The Obg domain occupies 1-157; sequence MKFIDEVSIS…IEVRLELKLI (157 aa). Residues 13 to 44 form a disordered region; sequence SGRGGPGCVSFRRESMQARGGPDGGNGGKGGD. Residues 33 to 43 show a composition bias toward gly residues; the sequence is GPDGGNGGKGG. An OBG-type G domain is found at 158-338; the sequence is ADVGIVGFPN…FVQELARQIL (181 aa). Residues 164–171, 189–193, 211–214, 290–293, and 319–321 each bind GTP; these read GFPNAGKS, FTTLT, DIPG, NKID, and SAV. Ser-171 and Thr-191 together coordinate Mg(2+).

This sequence belongs to the TRAFAC class OBG-HflX-like GTPase superfamily. OBG GTPase family. As to quaternary structure, monomer. It depends on Mg(2+) as a cofactor.

Its subcellular location is the cytoplasm. Its function is as follows. An essential GTPase which binds GTP, GDP and possibly (p)ppGpp with moderate affinity, with high nucleotide exchange rates and a fairly low GTP hydrolysis rate. Plays a role in control of the cell cycle, stress response, ribosome biogenesis and in those bacteria that undergo differentiation, in morphogenesis control. This Bdellovibrio bacteriovorus (strain ATCC 15356 / DSM 50701 / NCIMB 9529 / HD100) protein is GTPase Obg.